The sequence spans 198 residues: Glycerol-3-phosphate acyltransferase (198 aa).

Helical transmembrane passes span 5–25 (LILLSLLAYVIGSIPSGLWIG), 56–76 (SIVTVMDILKGTVATLLPFFF), 84–104 (FWLLTGAFAIIGHSFPLFAGF), 114–134 (AGVILAYAPLLFVAALIIFLL), and 158–178 (LFMGDWILIILIACITLFVVW).

The protein belongs to the PlsY family. Probably interacts with PlsX.

The protein localises to the cell membrane. It carries out the reaction an acyl phosphate + sn-glycerol 3-phosphate = a 1-acyl-sn-glycero-3-phosphate + phosphate. Its pathway is lipid metabolism; phospholipid metabolism. In terms of biological role, catalyzes the transfer of an acyl group from acyl-phosphate (acyl-PO(4)) to glycerol-3-phosphate (G3P) to form lysophosphatidic acid (LPA). This enzyme utilizes acyl-phosphate as fatty acyl donor, but not acyl-CoA or acyl-ACP. The chain is Glycerol-3-phosphate acyltransferase from Listeria welshimeri serovar 6b (strain ATCC 35897 / DSM 20650 / CCUG 15529 / CIP 8149 / NCTC 11857 / SLCC 5334 / V8).